The sequence spans 191 residues: UPF0302 protein USA300HOU_1400 (191 aa).

The protein belongs to the UPF0302 family.

This chain is UPF0302 protein USA300HOU_1400, found in Staphylococcus aureus (strain USA300 / TCH1516).